The primary structure comprises 134 residues: NADH-quinone oxidoreductase subunit A (134 aa).

The next 3 helical transmembrane spans lie at 14–34 (FFMF…LSWI), 66–86 (FYLI…LYAW), and 96–116 (IGFS…FYLV).

This sequence belongs to the complex I subunit 3 family. As to quaternary structure, NDH-1 is composed of 13 different subunits. Subunits NuoA, H, J, K, L, M, N constitute the membrane sector of the complex.

The protein localises to the cell membrane. It catalyses the reaction a quinone + NADH + 5 H(+)(in) = a quinol + NAD(+) + 4 H(+)(out). In terms of biological role, NDH-1 shuttles electrons from NADH, via FMN and iron-sulfur (Fe-S) centers, to quinones in the respiratory chain. The immediate electron acceptor for the enzyme in this species is believed to be ubiquinone. Couples the redox reaction to proton translocation (for every two electrons transferred, four hydrogen ions are translocated across the cytoplasmic membrane), and thus conserves the redox energy in a proton gradient. The chain is NADH-quinone oxidoreductase subunit A from Buchnera aphidicola subsp. Acyrthosiphon pisum (strain APS) (Acyrthosiphon pisum symbiotic bacterium).